The following is a 134-amino-acid chain: UPF0412 protein YaaI (134 aa).

The signal sequence occupies residues 1 to 23; that stretch reads MKSVFTISASLAISLMLCCTAQA.

This sequence belongs to the UPF0412 family.

The protein is UPF0412 protein YaaI of Shigella dysenteriae serotype 1 (strain Sd197).